The chain runs to 427 residues: Gamma-glutamyl phosphate reductase (427 aa).

The protein belongs to the gamma-glutamyl phosphate reductase family.

The protein localises to the cytoplasm. It catalyses the reaction L-glutamate 5-semialdehyde + phosphate + NADP(+) = L-glutamyl 5-phosphate + NADPH + H(+). It participates in amino-acid biosynthesis; L-proline biosynthesis; L-glutamate 5-semialdehyde from L-glutamate: step 2/2. In terms of biological role, catalyzes the NADPH-dependent reduction of L-glutamate 5-phosphate into L-glutamate 5-semialdehyde and phosphate. The product spontaneously undergoes cyclization to form 1-pyrroline-5-carboxylate. The chain is Gamma-glutamyl phosphate reductase from Rhodospirillum rubrum (strain ATCC 11170 / ATH 1.1.1 / DSM 467 / LMG 4362 / NCIMB 8255 / S1).